The sequence spans 624 residues: Forkhead box protein O1 (624 aa).

Disordered stretches follow at residues 1-62 (MAEA…PSAS) and 94-128 (APLSQHPPVPPAAAAAAAGGQLAGQPRKSSSSRRN). Threonine 24 carries the phosphothreonine; by PKB/AKT1 or PKB/AKT2 and SGK1 modification. Composition is skewed to low complexity over residues 37-62 (SATSSPAPSGGAAANPDGAAGLPSAS) and 105-119 (AAAAAAAGGQLAGQP). Positions 130–224 (WGNLSYADLI…KSGKSPRRRA (95 aa)) form a DNA-binding region, fork-head. DNA-binding regions lie at residues 181 to 188 (NSIRHNLS) and 204 to 207 (SSWW). Serine 182 carries the post-translational modification Phosphoserine; by STK4/MST1. Phosphoserine occurs at positions 188, 204, and 205. Positions 204-306 (SSWWMLNPEG…RLSPIMTEQD (103 aa)) are disordered. 2 positions are modified to N6-acetyllysine: lysine 215 and lysine 218. At serine 219 the chain carries Phosphoserine; by CDK1. Arginine 221 and arginine 223 each carry omega-N-methylarginine; by PRMT1. The short motif at 221 to 223 (RRR) is the Nuclear localization signal element. Serine 226 carries the post-translational modification Phosphoserine; by PKB/AKT1 and SGK1. N6-acetyllysine occurs at positions 232, 235, and 244. Residues 234-245 (AKSRGRAAKKKA) show a composition bias toward basic residues. The segment at 253 to 532 (GAGDSPGSQF…RLAPVKTALQ (280 aa)) is sufficient for interaction with NLK. Phosphoserine is present on residues serine 257 and serine 268. Over residues 279–296 (NWSTFRPRTSSNASTISG) the composition is skewed to polar residues. Phosphoserine; by PKB/AKT1 is present on serine 289. At serine 292 the chain carries Phosphoserine; by CK1 and SGK1. A Phosphoserine; by CK1 modification is found at serine 295. Serine 299 carries the phosphoserine; by DYRK1A modification. Position 303 is a phosphothreonine (threonine 303). A required for interaction with RUNX2 region spans residues 333–428 (SEISNPENME…YGGMSQYCAP (96 aa)). Position 393 is an N6-acetyllysine (lysine 393). A Required for interaction with SIRT1 motif is present at residues 431–435 (LKELL).

Interacts with LRPPRC. Interacts with RUNX2; the interaction inhibits RUNX2 transcriptional activity and mediates the IGF1/insulin-dependent BGLAP expression in osteoblasts Interacts with PPP2R1A; the interaction regulates the dephosphorylation of FOXO1 at Thr-24 and Ser-263 leading to its nuclear import. Interacts with NLK. Interacts with SIRT1; the interaction results in the deacetylation of FOXO1 leading to activation of FOXO1-mediated transcription of genes involved in DNA repair and stress resistance. Binds to CDK1. Interacts with the 14-3-3 proteins, YWHAG and YWHAZ; the interactions require insulin-stimulated phosphorylation on Thr-24, promote nuclear exit and loss of transcriptional activity. Interacts with SKP2; the interaction ubiquitinates FOXO1 leading to its proteasomal degradation. The interaction requires the presence of KRIT1. Interacts (via the C-terminal half) with ATF4 (via its DNA binding domain); the interaction occurs in osteoblasts, regulates glucose homeostasis via suppression of beta-cell proliferation and subsequent decrease in insulin production. Interacts with PRMT1; the interaction methylates FOXO1, prevents PKB/AKT1 phosphorylation and retains FOXO1 in the nucleus. Interacts with EP300 and CREBBP; the interactions acetylate FOXO1. Interacts with SIRT2; the interaction is disrupted in response to oxidative stress or serum deprivation, leading to increased level of acetylated FOXO1, which promotes stress-induced autophagy by stimulating E1-like activating enzyme ATG7. Interacts (acetylated form) with ATG7; the interaction is increased in response to oxidative stress or serum deprivation and promotes the autophagic process leading to cell death. Interacts (acetylated form) with PPARG. Interacts with XBP1; this interaction is direct and leads to FOXO1 ubiquitination and degradation via the proteasome pathway. Interacts (via the Fork-head domain) with CEBPA; the interaction increases when FOXO1 is deacetylated. Interacts with WDFY2. Forms a complex with WDFY2 and AKT1. Interacts with CRY1. Interacts with PPIA/CYPA; the interaction promotes FOXO1 dephosphorylation, nuclear accumulation and transcriptional activity. Interacts with TOX4; FOXO1 is required for full induction of TOX4-dependent activity and the interaction is inhibited by insulin. Interacts (when phosphorylated on Ser-226) with STUB1/CHIP. Phosphorylation by NLK promotes nuclear export and inhibits the transcriptional activity. In response to growth factors, phosphorylation on Thr-24, Ser-226 and Ser-292 by PKB/AKT1 promotes nuclear export and inactivation of transactivational activity. Phosphorylation on Thr-24 is required for binding 14-3-3 proteins. Phosphorylation of Ser-226 decreases DNA-binding activity and promotes the phosphorylation of Thr-24 and Ser-289, permitting phosphorylation of Ser-292 and Ser-295, probably by CDK1, leading to nuclear exclusion and loss of function. Stress signals, such as response to oxygen or nitric oxide, attenuate the PKB/AKT1-mediated phosphorylation leading to nuclear retention. Phosphorylation of Ser-299 is independent of IGF1 and leads to reduced function. Dephosphorylated on Thr-24 and Ser-226 by PP2A in beta-cells under oxidative stress leading to nuclear retention. Phosphorylation of Ser-219 by CDK1 disrupts binding of 14-3-3 proteins leading to nuclear accumulation and has no effect on DNA binding nor transcriptional activity. Phosphorylation by STK4/MST1 on Ser-182, upon oxidative stress, inhibits binding to 14-3-3 proteins and nuclear export. PPIA/CYPA promotes its dephosphorylation on Ser-226. In terms of processing, ubiquitinated by SKP2. Ubiquitination leads to proteasomal degradation. Ubiquitinated by STUB1/CHIP; when Ser-226 is phosphorylated. Post-translationally, methylation inhibits AKT1-mediated phosphorylation at Ser-226 and is increased by oxidative stress. Acetylated. Acetylation at Lys-232 and Lys-244 are necessary for autophagic cell death induction. Deacetylated by SIRT2 in response to oxidative stress or serum deprivation, thereby negatively regulating FOXO1-mediated autophagic cell death. Once in the nucleus, acetylated by CREBBP/EP300. Acetylation diminishes the interaction with target DNA and attenuates the transcriptional activity. It increases the phosphorylation at Ser-226. Deacetylation by SIRT1 results in reactivation of the transcriptional activity. Oxidative stress by hydrogen peroxide treatment appears to promote deacetylation and uncoupling of insulin-induced phosphorylation. By contrast, resveratrol acts independently of acetylation. Acetylated at Lys-393, promoting its localization to the nucleus and transcription factor activity. Deacetylation at Lys-393 by SIRT6, promotes its translocation into the cytoplasm, preventing its transcription factor activity. Deacetylation and subsequent inhibition by SIRT6 has different effects depending on cell types: it inhibits gluconeogenesis in hepatocytes, promotes glucose sensing in pancreatic beta-cells and regulates lipid catabolism in brown adipocytes.

Its subcellular location is the cytoplasm. It localises to the nucleus. Functionally, transcription factor that is the main target of insulin signaling and regulates metabolic homeostasis in response to oxidative stress. Binds to the insulin response element (IRE) with consensus sequence 5'-TT[G/A]TTTTG-3' and the related Daf-16 family binding element (DBE) with consensus sequence 5'-TT[G/A]TTTAC-3'. Activity suppressed by insulin. Main regulator of redox balance and osteoblast numbers and controls bone mass. Orchestrates the endocrine function of the skeleton in regulating glucose metabolism. Also acts as a key regulator of chondrogenic commitment of skeletal progenitor cells in response to lipid availability: when lipids levels are low, translocates to the nucleus and promotes expression of SOX9, which induces chondrogenic commitment and suppresses fatty acid oxidation. Acts synergistically with ATF4 to suppress osteocalcin/BGLAP activity, increasing glucose levels and triggering glucose intolerance and insulin insensitivity. Also suppresses the transcriptional activity of RUNX2, an upstream activator of osteocalcin/BGLAP. Acts as an inhibitor of glucose sensing in pancreatic beta cells by acting as a transcription repressor and suppressing expression of PDX1. In hepatocytes, promotes gluconeogenesis by acting together with PPARGC1A and CEBPA to activate the expression of genes such as IGFBP1, G6PC1 and PCK1. Also promotes gluconeogenesis by directly promoting expression of PPARGC1A and G6PC1. Important regulator of cell death acting downstream of CDK1, PKB/AKT1 and STK4/MST1. Promotes neural cell death. Mediates insulin action on adipose tissue. Regulates the expression of adipogenic genes such as PPARG during preadipocyte differentiation and, adipocyte size and adipose tissue-specific gene expression in response to excessive calorie intake. Regulates the transcriptional activity of GADD45A and repair of nitric oxide-damaged DNA in beta-cells. Required for the autophagic cell death induction in response to starvation or oxidative stress in a transcription-independent manner. Mediates the function of MLIP in cardiomyocytes hypertrophy and cardiac remodeling. Positive regulator of apoptosis in cardiac smooth muscle cells as a result of its transcriptional activation of pro-apoptotic genes. Regulates endothelial cell (EC) viability and apoptosis in a PPIA/CYPA-dependent manner via transcription of CCL2 and BCL2L11 which are involved in EC chemotaxis and apoptosis. This chain is Forkhead box protein O1 (FOXO1), found in Bos taurus (Bovine).